A 92-amino-acid chain; its full sequence is Small ribosomal subunit protein uS19 (92 aa).

Belongs to the universal ribosomal protein uS19 family.

Protein S19 forms a complex with S13 that binds strongly to the 16S ribosomal RNA. The chain is Small ribosomal subunit protein uS19 from Vibrio atlanticus (strain LGP32) (Vibrio splendidus (strain Mel32)).